Here is a 632-residue protein sequence, read N- to C-terminus: tRNA uridine 5-carboxymethylaminomethyl modification enzyme MnmG (632 aa).

Residues 15 to 20, isoleucine 127, and serine 182 each bind FAD; that span reads GAGHAG. 276–290 is an NAD(+) binding site; the sequence is GPRYCPSIEDKIVRF. Residue glutamine 373 coordinates FAD.

Belongs to the MnmG family. In terms of assembly, homodimer. Heterotetramer of two MnmE and two MnmG subunits. FAD is required as a cofactor.

Its subcellular location is the cytoplasm. Functionally, NAD-binding protein involved in the addition of a carboxymethylaminomethyl (cmnm) group at the wobble position (U34) of certain tRNAs, forming tRNA-cmnm(5)s(2)U34. The protein is tRNA uridine 5-carboxymethylaminomethyl modification enzyme MnmG of Streptococcus pyogenes serotype M2 (strain MGAS10270).